Reading from the N-terminus, the 115-residue chain is NADH-ubiquinone oxidoreductase chain 3 (115 aa).

3 consecutive transmembrane segments (helical) span residues 3–23 (LPLA…IAFW), 55–75 (FFLV…LLPL), and 86–106 (LMLT…AYEW).

The protein belongs to the complex I subunit 3 family. Core subunit of respiratory chain NADH dehydrogenase (Complex I) which is composed of 45 different subunits. Interacts with TMEM186. Interacts with TMEM242.

Its subcellular location is the mitochondrion inner membrane. It catalyses the reaction a ubiquinone + NADH + 5 H(+)(in) = a ubiquinol + NAD(+) + 4 H(+)(out). Its function is as follows. Core subunit of the mitochondrial membrane respiratory chain NADH dehydrogenase (Complex I) which catalyzes electron transfer from NADH through the respiratory chain, using ubiquinone as an electron acceptor. Essential for the catalytic activity of complex I. This chain is NADH-ubiquinone oxidoreductase chain 3, found in Lemur catta (Ring-tailed lemur).